Reading from the N-terminus, the 119-residue chain is Large ribosomal subunit protein bL20 (119 aa).

The protein belongs to the bacterial ribosomal protein bL20 family.

Its function is as follows. Binds directly to 23S ribosomal RNA and is necessary for the in vitro assembly process of the 50S ribosomal subunit. It is not involved in the protein synthesizing functions of that subunit. This is Large ribosomal subunit protein bL20 from Bradyrhizobium sp. (strain BTAi1 / ATCC BAA-1182).